A 62-amino-acid chain; its full sequence is Phyllokinin-1 (62 aa).

Positions 1–19 are cleaved as a signal peptide; it reads MSFLKKSLFLVLFLGLVSS. Positions 20–48 are excised as a propeptide; that stretch reads SICEEEKRETEEEENEDEIEEESEEKKRE. Positions 22–62 are disordered; sequence CEEEKRETEEEENEDEIEEESEEKKREDPERPPGFTPFRVY. The segment covering 30–42 has biased composition (acidic residues); sequence EEEENEDEIEEES. Residues 43 to 52 are compositionally biased toward basic and acidic residues; it reads EEKKREDPER. Y62 carries the sulfotyrosine; partial modification.

Belongs to the frog skin active peptide (FSAP) family. Bradykinin-related peptide subfamily. In terms of processing, asp,Pro,Glu-[Thr6,Val10]-phyllokinin and [Thr6,Val10]-phyllokinin occur in sulfated and nonsulfated forms. [Thr6]-bradykinin and Des-Arg-[Thr6]-bradykinin are nonsulfated. As to expression, expressed by the skin glands.

The protein localises to the secreted. In terms of biological role, inhibits ACE with a Ki of 1.6 uM, and targets B2 bradykinin receptor (BDKRB2). Provokes contraction of smooth muscle preparation (ileum). In vivo, induces an early hyperalgesic effects in living rats after intraplantar injection. This is Phyllokinin-1 from Pithecopus azureus (Orange-legged monkey tree frog).